Here is a 1187-residue protein sequence, read N- to C-terminus: MATESTTNTTTIIARADQHDIDLHKASDRVNFGSIKEPIDVPYLLGVQTDSFDWLIGNERWKARVEEDEKNGTNTVAHTSGLDEVFNEISPIENFAQTMSLTFSDPYFEEPRHTVQECKEKDYTYSAPLYVNAEFENGDTGEIKSQTVFMGDFPLQTPHGTFIIGGTERVIVSQLVRSPGVYFDRQQDRTSDKEVFGAKIIPSRGAWLEFEIDKKDQPQVRVDRKRKQSAIVFLMAIGMTKSEIAQAFKDYPLVLDALEKETLETQDEALVDLYRKIRPADTPTPEAGKNLLDSFYFNTKRYDLARVGRYKINRKLGVEADFNDRSLHQEDIIATIKYLVALHDGAATFPGKRNGEDVDLRVDVDDIDHFGNRRIRQVGELIQNQLRTGLSRMERVVRERMTTQDAEAITPQSLINIRPVNATIKEFFGTSQLSQFMDQNNPLSGVTNKRRLSALGPGGLSRDRASMEVRDVHPSHFGRMCPIESPEGPNIGLIGSLATFGRVNPFGFIETPYRKVVNGHVTDEVEYMTADRDLDHVIAQANQELDENGNFVQKSALARVGEEEAVDVPVSSVDYMDVSPRQMVSLGASLIPFLEHDEGHRALMGTNMQRQAVPLIESERPLVGTGSEWRAANDSGDVIKSEKDGVVTYVSADLIRVMNDDGTTSSYKLAKFQRSNQTTCYNQRPIVHDGERVEAGSVMADGPAIQNGDLALGKNLLIAFMPWNGYNYEDAVIISQRLVQDDTLSSIHIEEYEIDARETKLGAEEITRDLPNVGEDAVANLDERGIIRIGAEVEAGDILVGKVTPKGETELTPEERLLRAIFGEKSREVRDTSLRVPHGETGTVIGVKEITREDAEEDGDELPNGVNQMIRVYIAQHRKITVGDKLSGRHGNKGCISRILPEEDMPFLADGTPVDIMLNPLGVPSRMNLGQVLELHLGWIAHSGWDISLDPNLEAEWKKLIPSGAEKAEPNTPVATPVFDGVKPEVLKGLLSTTLPNRDGDRLVGPDGKATLFDGRTGEPYTKPISVGYMYMLKLHHLVDDKIHARSTGPYSMITQQPLGGKAQFGGQRFGEMEVWALEAYGAAYTLHEMMTTKSDDVDGRVRVYGAIVKGDNLPPAGIPESFKVLLKEMQSLSLNVEVLNAEGVAIDMKDEDDDPASSADDLGFNIGARPDAAAKEDQKAEEPEYQ.

Positions 1150 to 1187 (KDEDDDPASSADDLGFNIGARPDAAAKEDQKAEEPEYQ) are disordered. Residues 1173–1187 (AAAKEDQKAEEPEYQ) show a composition bias toward basic and acidic residues.

The protein belongs to the RNA polymerase beta chain family. The RNAP catalytic core consists of 2 alpha, 1 beta, 1 beta' and 1 omega subunit. When a sigma factor is associated with the core the holoenzyme is formed, which can initiate transcription.

The catalysed reaction is RNA(n) + a ribonucleoside 5'-triphosphate = RNA(n+1) + diphosphate. Functionally, DNA-dependent RNA polymerase catalyzes the transcription of DNA into RNA using the four ribonucleoside triphosphates as substrates. In Bifidobacterium longum (strain NCC 2705), this protein is DNA-directed RNA polymerase subunit beta.